Reading from the N-terminus, the 705-residue chain is MMPFGGIAARLQRDRLRAEGVGEHNNAVKYLNQDYEALKQECIESGTLFRDPQFPAGPTALGFKELGPYSSKTRGVEWKRPSELVDDPQFIVGGATRTDICQGALGDCWLLAAIGSLTLNEELLHRVVPHGQSFQEDYAGIFHFQIWQFGEWVDVVVDDLLPTKDGELLFVHSAECTEFWSALLEKAYAKLNGCYESLSGGSTTEGFEDFTGGVAEMYDLKRAPRNMGHIIRKALERGSLLGCSIDITSAFDMEAVTFKKLVKGHAYSVTAFKDVNYRGQQEQLIRIRNPWGQVEWTGAWSDGSSEWDNIDPSDREELQLKMEDGEFWMSFRDFMREFSRLEICNLTPDALTKDELSRWHTQVFEGTWRRGSTAGGCRNNPATFWINPQFKIKLLEEDDDPGDDEVACSFLVALMQKHRRRERRVGGDMHTIGFAVYEVPEEAQGSQNVHLKKDFFLRNQSRARSETFINLREVSNQIRLPPGEYIVVPSTFEPHKEADFILRVFTEKQSDTAELDEEISADLADEEEITEDDIEDGFKNMFQQLAGEDMEISVFELKTILNRVIARHKDLKTDGFSLDSCRNMVNLMDKDGSARLGLVEFQILWNKIRSWLTIFRQYDLDKSGTMSSYEMRMALESAGFKLNNKLHQVVVARYADAETGVDFDNFVCCLVKLETMFRFFHSMDRDGTGTAVMNLAEWLLLTMCG.

The Calpain catalytic domain occupies 48-347 (LFRDPQFPAG…FSRLEICNLT (300 aa)). Active-site residues include C108, H265, and N289. The tract at residues 348–517 (PDALTKDELS…KQSDTAELDE (170 aa)) is domain III. Residues 518 to 533 (EISADLADEEEITEDD) form a linker region. The EF-hand 1 domain maps to 530 to 565 (TEDDIEDGFKNMFQQLAGEDMEISVFELKTILNRVI). The domain IV stretch occupies residues 534 to 704 (IEDGFKNMFQ…LAEWLLLTMC (171 aa)). Ca(2+) contacts are provided by D549, E551, E556, D589, D591, S593, R595, E600, D619, D621, S623, T625, and E630. EF-hand domains are found at residues 606 to 641 (NKIR…AGFK) and 671 to 705 (VKLE…TMCG).

This sequence belongs to the peptidase C2 family. In terms of assembly, heterodimer of large (catalytic) and a small (regulatory) subunit. Ca(2+) is required as a cofactor. Post-translationally, the N-terminus is blocked. Ubiquitously expressed.

Its subcellular location is the cytoplasm. The protein resides in the cell membrane. The enzyme catalyses Broad endopeptidase specificity.. Its activity is regulated as follows. Activated by micromolar concentrations of calcium and inhibited by calpastatin. Its function is as follows. Calcium-regulated non-lysosomal thiol-protease which catalyze limited proteolysis of substrates involved in cytoskeletal remodeling and signal transduction. This is Calpain-1 catalytic subunit from Gallus gallus (Chicken).